Reading from the N-terminus, the 275-residue chain is Phosphate import ATP-binding protein PstB 3 (275 aa).

The tract at residues 1-26 is disordered; that stretch reads MATQETDDSLISTDVQTDATERGDQP. Over residues 9–18 the composition is skewed to polar residues; sequence SLISTDVQTD. One can recognise an ABC transporter domain in the interval 31–270; the sequence is VETKHLDVHY…PEDDRVEDYI (240 aa). 63-70 contributes to the ATP binding site; sequence GPSGCGKS.

This sequence belongs to the ABC transporter superfamily. Phosphate importer (TC 3.A.1.7) family. In terms of assembly, the complex is composed of two ATP-binding proteins (PstB), two transmembrane proteins (PstC and PstA) and a solute-binding protein (PstS).

It localises to the cell membrane. The catalysed reaction is phosphate(out) + ATP + H2O = ADP + 2 phosphate(in) + H(+). Its function is as follows. Part of the ABC transporter complex PstSACB involved in phosphate import. Responsible for energy coupling to the transport system. In Natronomonas pharaonis (strain ATCC 35678 / DSM 2160 / CIP 103997 / JCM 8858 / NBRC 14720 / NCIMB 2260 / Gabara) (Halobacterium pharaonis), this protein is Phosphate import ATP-binding protein PstB 3.